A 159-amino-acid chain; its full sequence is Ribosomal RNA large subunit methyltransferase H (159 aa).

Residues L76, G108, and 127 to 132 each bind S-adenosyl-L-methionine; that span reads FSKMTL.

This sequence belongs to the RNA methyltransferase RlmH family. In terms of assembly, homodimer.

The protein localises to the cytoplasm. It catalyses the reaction pseudouridine(1915) in 23S rRNA + S-adenosyl-L-methionine = N(3)-methylpseudouridine(1915) in 23S rRNA + S-adenosyl-L-homocysteine + H(+). Functionally, specifically methylates the pseudouridine at position 1915 (m3Psi1915) in 23S rRNA. The sequence is that of Ribosomal RNA large subunit methyltransferase H from Bacillus cereus (strain ATCC 10987 / NRS 248).